An 81-amino-acid polypeptide reads, in one-letter code: Photosystem I iron-sulfur center (81 aa).

4Fe-4S ferredoxin-type domains lie at 2–31 (SHIV…MVPW) and 39–68 (MASA…VRVY). [4Fe-4S] cluster contacts are provided by Cys-11, Cys-14, Cys-17, Cys-21, Cys-48, Cys-51, Cys-54, and Cys-58.

The eukaryotic PSI reaction center is composed of at least 11 subunits. Requires [4Fe-4S] cluster as cofactor.

The protein resides in the plastid. Its subcellular location is the chloroplast thylakoid membrane. The enzyme catalyses reduced [plastocyanin] + hnu + oxidized [2Fe-2S]-[ferredoxin] = oxidized [plastocyanin] + reduced [2Fe-2S]-[ferredoxin]. In terms of biological role, apoprotein for the two 4Fe-4S centers FA and FB of photosystem I (PSI); essential for photochemical activity. FB is the terminal electron acceptor of PSI, donating electrons to ferredoxin. The C-terminus interacts with PsaA/B/D and helps assemble the protein into the PSI complex. Required for binding of PsaD and PsaE to PSI. PSI is a plastocyanin/cytochrome c6-ferredoxin oxidoreductase, converting photonic excitation into a charge separation, which transfers an electron from the donor P700 chlorophyll pair to the spectroscopically characterized acceptors A0, A1, FX, FA and FB in turn. This is Photosystem I iron-sulfur center from Stigeoclonium helveticum (Green alga).